Consider the following 497-residue polypeptide: MAKELKDLTKRSENYSQWYNDLVVKADLAEQSAVRGCMVIKPYGYAIWEKMQRQLDDMFKETGHVNAYFPLLIPKSFLSREAEHVEGFAKECAVVTHYRLKNAEDGSGVVVDPAAKLEEELIIRPTSETIIWNTYKNWIQSYRDLPILCNQWANVFRWEMRTRLFLRTAEFLWQEGHTAHATREEAEEEAIRMLNVYAEFAEKYMAVPVVKGVKSANERFAGALDTYTIEAMMQDGKALQSGTSHFLGQNFAKAFDVQFVNKENKLEYVWATSWGVSTRLMGALIMTHSDDNGLVLPPHLAPIQVVIVPIYKNDEQLKLIDAKVEGIVARLKQLGISVKYDNADNKRPGFKFADYELKGVPVRLVMGGRDLENNTMEVMRRDTLEKETVTCDGIETYVQNLLEEIQANIYKKARTYRDSRITTVDSYDEFKEKIEEGGFILAHWDGTVETEEKIKEETKATIRCIPFESFVEGDKEPGKCMVTGKPSACRVIFARSY.

It belongs to the class-II aminoacyl-tRNA synthetase family. ProS type 3 subfamily. As to quaternary structure, homodimer.

It is found in the cytoplasm. It catalyses the reaction tRNA(Pro) + L-proline + ATP = L-prolyl-tRNA(Pro) + AMP + diphosphate. Its function is as follows. Catalyzes the attachment of proline to tRNA(Pro) in a two-step reaction: proline is first activated by ATP to form Pro-AMP and then transferred to the acceptor end of tRNA(Pro). The sequence is that of Proline--tRNA ligase from Bacteroides fragilis (strain ATCC 25285 / DSM 2151 / CCUG 4856 / JCM 11019 / LMG 10263 / NCTC 9343 / Onslow / VPI 2553 / EN-2).